The sequence spans 1013 residues: Endosome/lysosome-associated apoptosis and autophagy regulator 1 (1013 aa).

The N-terminal stretch at 1–41 (MAEPGHSHHLSARVRGRTERRIPRLWRLLLWAGTAFQVTQG) is a signal peptide. Over 42–910 (TGPELHACKE…ICKTIDFWLK (869 aa)) the chain is Extracellular. N-linked (GlcNAc...) asparagine glycosylation occurs at asparagine 153. Intrachain disulfides connect cysteine 278/cysteine 295, cysteine 308/cysteine 330, and cysteine 311/cysteine 342. 2 N-linked (GlcNAc...) asparagine glycosylation sites follow: asparagine 404 and asparagine 672. Residues 656-858 (NDCTFSRNTP…LWESAAACPL (203 aa)) form the MRH domain. 4 disulfide bridges follow: cysteine 658/cysteine 704, cysteine 714/cysteine 739, cysteine 808/cysteine 844, and cysteine 820/cysteine 856. The helical transmembrane segment at 911-931 (VGISAGTCTAILLTVLTCYFW) threads the bilayer. The Cytoplasmic segment spans residues 932 to 1013 (KKNQKLEYKY…TSSGGLDMDL (82 aa)).

This sequence belongs to the ELAPOR family. Interacts with HSPA5; may regulate the function of HSPA5 in apoptosis and cell proliferation. As to expression, expressed in normal endometrium but overexpressed in endometroid tumors.

The protein resides in the cell membrane. It localises to the late endosome membrane. Its subcellular location is the golgi apparatus. It is found in the trans-Golgi network membrane. The protein localises to the lysosome membrane. The protein resides in the endoplasmic reticulum membrane. Functionally, may protect cells from cell death by inducing cytosolic vacuolization and up-regulating the autophagy pathway. May play a role in apoptosis and cell proliferation through its interaction with HSPA5. This is Endosome/lysosome-associated apoptosis and autophagy regulator 1 from Homo sapiens (Human).